Reading from the N-terminus, the 60-residue chain is Cytotoxin SP15d (60 aa).

4 disulfides stabilise this stretch: Cys3/Cys21, Cys14/Cys38, Cys42/Cys53, and Cys54/Cys59.

It belongs to the three-finger toxin family. Short-chain subfamily. Type IA cytotoxin sub-subfamily. In terms of assembly, monomer in solution; Homodimer and oligomer in the presence of negatively charged lipids forming a pore with a size ranging between 20 and 30 Angstroms. As to expression, expressed by the venom gland.

The protein localises to the secreted. The protein resides in the target cell membrane. Shows cytolytic activity on many different cells by forming pore in lipid membranes. In vivo, increases heart rate or kills the animal by cardiac arrest. In addition, it binds to heparin with high affinity, interacts with Kv channel-interacting protein 1 (KCNIP1) in a calcium-independent manner, and binds to integrin alpha-V/beta-3 (ITGAV/ITGB3) with moderate affinity. The protein is Cytotoxin SP15d of Naja atra (Chinese cobra).